Consider the following 278-residue polypeptide: Rhomboid protease GlpG (278 aa).

6 helical membrane passes run 94-114, 143-163, 175-195, 196-216, 224-241, and 245-267; these read AGPL…LMLI, AFLH…WYLG, LLVL…LFSG, ANFG…WLTG, ISLP…LIAG, and ILGL…LMAF. Ser202 acts as the Nucleophile in catalysis. The active site involves His255.

The protein belongs to the peptidase S54 family.

The protein resides in the cell inner membrane. The enzyme catalyses Cleaves type-1 transmembrane domains using a catalytic dyad composed of serine and histidine that are contributed by different transmembrane domains.. Its function is as follows. Rhomboid-type serine protease that catalyzes intramembrane proteolysis. The protein is Rhomboid protease GlpG of Yersinia pestis bv. Antiqua (strain Antiqua).